Reading from the N-terminus, the 113-residue chain is Neocarzinostatin (113 aa).

Intrachain disulfides connect Cys37–Cys47 and Cys88–Cys93.

The protein belongs to the neocarzinostatin family.

Its function is as follows. NCS has antibiotic activity (for Gram-positive bacteria) and antitumor activity (for certain mouse tumors). NCS binds non-covalently to a chromophore which is the cytotoxic and mutagenic component of the antibiotic. The chromophore binds to DNA as a weak intercalator and causes single- and double-strand breaks. The chain is Neocarzinostatin (ncsA) from Streptomyces malayensis.